The primary structure comprises 171 residues: 3-hydroxydecanoyl-[acyl-carrier-protein] dehydratase (171 aa).

Histidine 71 is an active-site residue.

Belongs to the thioester dehydratase family. FabA subfamily. In terms of assembly, homodimer.

It is found in the cytoplasm. The catalysed reaction is a (3R)-hydroxyacyl-[ACP] = a (2E)-enoyl-[ACP] + H2O. It catalyses the reaction (3R)-hydroxydecanoyl-[ACP] = (2E)-decenoyl-[ACP] + H2O. The enzyme catalyses (2E)-decenoyl-[ACP] = (3Z)-decenoyl-[ACP]. The protein operates within lipid metabolism; fatty acid biosynthesis. Functionally, necessary for the introduction of cis unsaturation into fatty acids. Catalyzes the dehydration of (3R)-3-hydroxydecanoyl-ACP to E-(2)-decenoyl-ACP and then its isomerization to Z-(3)-decenoyl-ACP. Can catalyze the dehydratase reaction for beta-hydroxyacyl-ACPs with saturated chain lengths up to 16:0, being most active on intermediate chain length. The chain is 3-hydroxydecanoyl-[acyl-carrier-protein] dehydratase from Rhizobium meliloti (strain 1021) (Ensifer meliloti).